A 352-amino-acid polypeptide reads, in one-letter code: Uroporphyrinogen decarboxylase (352 aa).

Substrate contacts are provided by residues 27–31 (RQAGR), D77, Y154, T209, and H325.

This sequence belongs to the uroporphyrinogen decarboxylase family. In terms of assembly, homodimer.

The protein resides in the cytoplasm. The enzyme catalyses uroporphyrinogen III + 4 H(+) = coproporphyrinogen III + 4 CO2. It participates in porphyrin-containing compound metabolism; protoporphyrin-IX biosynthesis; coproporphyrinogen-III from 5-aminolevulinate: step 4/4. Functionally, catalyzes the decarboxylation of four acetate groups of uroporphyrinogen-III to yield coproporphyrinogen-III. The sequence is that of Uroporphyrinogen decarboxylase from Legionella pneumophila (strain Lens).